The sequence spans 362 residues: Histidine protein methyltransferase 1 homolog (362 aa).

Positions 18–88 are disordered; that stretch reads TSLDDGTCVL…EACKHQPSWK (71 aa). Positions 30–51 are enriched in basic and acidic residues; the sequence is QKGKQDKRQSTERPGLPRDHSW. Positions 52-65 are enriched in polar residues; that stretch reads KCSSLGNAASSEDT. 2 positions are modified to phosphoserine: serine 62 and serine 67. Basic and acidic residues predominate over residues 73–82; the sequence is DRSDDPEACK. Tele-methylhistidine is present on histidine 144. S-adenosyl-L-methionine-binding positions include 158–162, glycine 185, and 206–208; these read IWECT and QDY. The Nuclear localization signal motif lies at 237-243; sequence PDGKRQR. Residues 259–261 and serine 283 each bind S-adenosyl-L-methionine; that span reads GEW.

Belongs to the methyltransferase superfamily. METTL18 family. Interacts with GRWD1 and members of the heat shock protein 90 and 70 families; these proteins may possibly be methylation substrates for the enzyme. In terms of processing, monomethylated at His-144 through automethylation. Automethylation at His-144 positively regulates the methyltransferase activity toward RPL3. Probably methylated on other residues.

Its subcellular location is the cytoplasm. It is found in the cytosol. The protein resides in the nucleus. The protein localises to the nucleolus. The enzyme catalyses L-histidyl-[protein] + S-adenosyl-L-methionine = N(tele)-methyl-L-histidyl-[protein] + S-adenosyl-L-homocysteine + H(+). Functionally, protein-L-histidine N-tele-methyltransferase that specifically monomethylates RPL3, thereby regulating translation elongation. Histidine methylation of RPL3 regulates translation elongation by slowing ribosome traversal on tyrosine codons: slower elongation provides enough time for proper folding of synthesized proteins and prevents cellular aggregation of tyrosine-rich proteins. The polypeptide is Histidine protein methyltransferase 1 homolog (Mus musculus (Mouse)).